Consider the following 979-residue polypeptide: Putative disease resistance protein RGA1 (979 aa).

In terms of domain architecture, NB-ARC spans 143–437 (GSVLTEPQVY…MAHGFLLSKG (295 aa)). ATP is bound at residue 182–189 (GMGGLGKT). 12 LRR repeats span residues 524–547 (FVSL…IGDL), 549–570 (HLRY…RLCK), 571–594 (LQNL…QTSK), 595–619 (LGSL…GLLT), 637–661 (LGEL…KKDT), 748–773 (LPCL…VHPG), 823–841 (VKTL…SISN), 842–866 (LRAL…MFKS), 868–890 (ANLK…SLAS), 891–915 (LNAL…GVKG), 917–939 (TSLT…GLQH), and 940–965 (LTAL…IGED).

This sequence belongs to the disease resistance NB-LRR family.

In terms of biological role, disease resistance protein. Resistance proteins guard the plant against pathogens that contain an appropriate avirulence protein via a direct or indirect interaction with this avirulence protein. That triggers a defense system which restricts the pathogen growth. The chain is Putative disease resistance protein RGA1 (RGA1) from Solanum bulbocastanum (Wild potato).